The primary structure comprises 486 residues: ATP-dependent rRNA helicase RRP3 (486 aa).

The segment at 1 to 58 (MNGAKRRKVAQDTPRNTKPVAQEKPARAEPKPSSDEESEEESATLEEPSAEETAVDAP) is disordered. Residues 24 to 34 (KPARAEPKPSS) are compositionally biased toward basic and acidic residues. Residues 35–54 (DEESEEESATLEEPSAEETA) are compositionally biased toward acidic residues. The Q motif motif lies at 60–88 (KTFKDLGVNDALCEACEKLNYKYPTPIQE). The region spanning 91–262 (IPVALQGRDI…RASLRDPVKV (172 aa)) is the Helicase ATP-binding domain. 104–111 (AETGSGKT) lines the ATP pocket. Positions 210 to 213 (DEAD) match the DEAD box motif. The region spanning 286-434 (QKDVHLIYLI…EYPTEKEEVM (149 aa)) is the Helicase C-terminal domain. 2 stretches are compositionally biased toward basic and acidic residues: residues 451–460 (MKSFTEERGK) and 476–486 (RGRDDMDREEG). The disordered stretch occupies residues 451–486 (MKSFTEERGKKGSTLKGGRGKKGGKRGRDDMDREEG).

This sequence belongs to the DEAD box helicase family. DDX47/RRP3 subfamily. Interacts with the SSU processome.

It localises to the nucleus. The catalysed reaction is ATP + H2O = ADP + phosphate + H(+). Its function is as follows. ATP-dependent rRNA helicase required for pre-ribosomal RNA processing. Involved in the maturation of the 35S-pre-rRNA and to its cleavage to mature 18S rRNA. The chain is ATP-dependent rRNA helicase RRP3 from Gibberella zeae (strain ATCC MYA-4620 / CBS 123657 / FGSC 9075 / NRRL 31084 / PH-1) (Wheat head blight fungus).